The sequence spans 434 residues: Exopolygalacturonase X-1 (434 aa).

The first 22 residues, 1–22 (MKLSHLLTSAVSVLSLGLTVEG), serve as a signal peptide directing secretion. Residues Asn113, Asn129, and Asn199 are each glycosylated (N-linked (GlcNAc...) asparagine). The stretch at 231-252 (SKNIVIQNSVINNGDDCVSFKP) is one PbH1 1 repeat. Asp245 serves as the catalytic Proton donor. The cysteines at positions 247 and 264 are disulfide-linked. 2 N-linked (GlcNAc...) asparagine glycosylation sites follow: Asn253 and Asn265. The PbH1 2 repeat unit spans residues 254-274 (STEILVQNLYCNGSHGISVGS). His268 is an active-site residue. N-linked (GlcNAc...) asparagine glycans are attached at residues Asn292, Asn297, Asn329, Asn354, and Asn364. A PbH1 3 repeat occupies 327–348 (VSNITYEDMYIENVDWAIEITQ). Residues 362 to 405 (PSNLTISDVYISNMYGTTSSARDPNIGTIVCSSPDVCSNIYVEN) form a PbH1 4 repeat. Cys392 and Cys398 form a disulfide bridge. N-linked (GlcNAc...) asparagine glycans are attached at residues Asn423 and Asn430.

Belongs to the glycosyl hydrolase 28 family.

It localises to the secreted. The enzyme catalyses [(1-&gt;4)-alpha-D-galacturonosyl](n) + H2O = alpha-D-galacturonate + [(1-&gt;4)-alpha-D-galacturonosyl](n-1). Its function is as follows. Specific in hydrolyzing the terminal glycosidic bond of polygalacturonic acid and oligogalacturonates. This is Exopolygalacturonase X-1 (pgaX-1) from Emericella nidulans (strain FGSC A4 / ATCC 38163 / CBS 112.46 / NRRL 194 / M139) (Aspergillus nidulans).